The chain runs to 901 residues: HTH-type transcriptional regulator MalT (901 aa).

39-46 contacts ATP; sequence SPAGYGKT. The region spanning 829–894 is the HTH luxR-type domain; sequence ELIRTSPLTQ…DAVQHAQQLL (66 aa). The H-T-H motif DNA-binding region spans 853–872; sequence NEQIAGELDVAATTIKTHIR.

Belongs to the MalT family. As to quaternary structure, monomer in solution. Oligomerizes to an active state in the presence of the positive effectors ATP and maltotriose.

Its activity is regulated as follows. Activated by ATP and maltotriose, which are both required for DNA binding. Its function is as follows. Positively regulates the transcription of the maltose regulon whose gene products are responsible for uptake and catabolism of malto-oligosaccharides. Specifically binds to the promoter region of its target genes, recognizing a short DNA motif called the MalT box. The chain is HTH-type transcriptional regulator MalT from Klebsiella pneumoniae (strain 342).